Consider the following 75-residue polypeptide: Large ribosomal subunit protein bL28 (75 aa).

This sequence belongs to the bacterial ribosomal protein bL28 family.

This Baumannia cicadellinicola subsp. Homalodisca coagulata protein is Large ribosomal subunit protein bL28.